Consider the following 329-residue polypeptide: Peroxidase 18 (329 aa).

Positions 1–29 are cleaved as a signal peptide; it reads MALQFFSCKPKYTFLSSLLLLLLLSSSVA. 4 disulfide bridges follow: cysteine 40-cysteine 116, cysteine 73-cysteine 78, cysteine 122-cysteine 325, and cysteine 201-cysteine 235. Histidine 71 serves as the catalytic Proton acceptor. Ca(2+) is bound by residues aspartate 72, valine 75, glycine 77, aspartate 79, and serine 81. Asparagine 87 carries an N-linked (GlcNAc...) asparagine glycan. Isoleucine 164 lines the substrate pocket. Histidine 194 is a heme b binding site. Threonine 195 provides a ligand contact to Ca(2+). Residues aspartate 249, threonine 252, and aspartate 257 each coordinate Ca(2+).

This sequence belongs to the peroxidase family. Classical plant (class III) peroxidase subfamily. The cofactor is heme b. It depends on Ca(2+) as a cofactor.

It is found in the secreted. It carries out the reaction 2 a phenolic donor + H2O2 = 2 a phenolic radical donor + 2 H2O. In terms of biological role, removal of H(2)O(2), oxidation of toxic reductants, biosynthesis and degradation of lignin, suberization, auxin catabolism, response to environmental stresses such as wounding, pathogen attack and oxidative stress. These functions might be dependent on each isozyme/isoform in each plant tissue. This is Peroxidase 18 (PER18) from Arabidopsis thaliana (Mouse-ear cress).